Here is a 326-residue protein sequence, read N- to C-terminus: Ankyrin repeat domain-containing protein 9 (326 aa).

The tract at residues 1–20 (MPWDTRPGRSANGGPEGPGA) is disordered. The ANK 1 repeat unit spans residues 70–99 (SPSEALLYALVHDHQAYAHYLLATFPRCAL). Residues 108–109 (CC) carry the Important role in both nutrient sensing and binding/regulation of IMPDH2 motif. ANK repeat units follow at residues 111–140 (APGP…DFPV) and 157–186 (GGGT…SPGL).

In terms of assembly, part of an E3 ubiquitin-protein ligase complex with Elongin BC (ELOB and ELOC), CUL5 and ANKRD9. Interacts with IMPDH2; leading to ubiquitination of IMPDH2 and its subsequent proteasomal degradation.

It is found in the cytoplasmic vesicle. It localises to the cytoplasm. Its subcellular location is the cytosol. It participates in protein modification; protein ubiquitination. Functionally, substrate receptor subunit of a cullin-RING superfamily E3 ligase complex (CUL5-based E3 ubiquitin ligase complex) which mediates the ubiquitination and subsequent proteasomal degradation of target proteins. Depending of the metabolic state of the cell, promotes the proteasomal degradation of IMPDH2, the rate-limiting enzyme in GTP biosynthesis or protects IMPDH2 by stabilizing IMPDH2 filaments assembly. Implicated in different cellular processes, like copper homeostasis and cell proliferation. This chain is Ankyrin repeat domain-containing protein 9 (Ankrd9), found in Mus musculus (Mouse).